The sequence spans 638 residues: Sodium- and chloride-dependent glycine transporter 1 (638 aa).

The segment at 1–29 is disordered; it reads MAAAQGPVAPSSLEQNGAVPSEATKKDQN. The Cytoplasmic segment spans residues 1–40; sequence MAAAQGPVAPSSLEQNGAVPSEATKKDQNLKRGNWGNQIE. The next 3 helical transmembrane spans lie at 41–61, 69–88, and 112–132; these read FVLT…FPYL, AFMF…LFFM, and GVGY…NVVI. Residues 133–219 lie on the Extracellular side of the membrane; it reads CIAFYYFFSS…DDIGNFGEVR (87 aa). Residues asparagine 169, asparagine 172, asparagine 182, and asparagine 188 are each glycosylated (N-linked (GlcNAc...) asparagine). A run of 9 helical transmembrane segments spans residues 220–238, 247–264, 300–317, 329–350, 383–402, 431–449, 465–485, 506–525, and 544–562; these read LPLL…LCLI, VVYF…ILFI, IFYS…MASY, VIIS…FSIL, LPIS…LLGL, YVTL…PLTS, SFSL…IYGH, ICWR…FSVI, and IGFL…YALF. The Cytoplasmic portion of the chain corresponds to 563-638; sequence QFCRTDGDTL…GSSRFQDSRI (76 aa). The disordered stretch occupies residues 597–638; the sequence is RYAPTTTPSPEDGLEVQPLHPDKAQIPMVGSNGSSRFQDSRI. Threonine 603 is modified (phosphothreonine). A phosphoserine mark is found at serine 605 and serine 630. The tract at residues 627–638 is essential for interaction with EXOC1; that stretch reads SNGSSRFQDSRI. The segment covering 627–638 has biased composition (polar residues); it reads SNGSSRFQDSRI.

Belongs to the sodium:neurotransmitter symporter (SNF) (TC 2.A.22) family. SLC6A9 subfamily. As to quaternary structure, interacts with EXOC1; interaction increases the transporter capacity of SLC6A9 probably by promoting its insertion into the cell membrane. Interacts with EXOC3 and EXOC4.

The protein localises to the cell membrane. It catalyses the reaction glycine(out) + chloride(out) + 2 Na(+)(out) = glycine(in) + chloride(in) + 2 Na(+)(in). Sodium- and chloride-dependent glycine transporter which is essential for regulating glycine concentrations at inhibitory glycinergic synapses. This is Sodium- and chloride-dependent glycine transporter 1 (SLC6A9) from Bos taurus (Bovine).